The primary structure comprises 456 residues: 3-isopropylmalate dehydratase large subunit (456 aa).

The [4Fe-4S] cluster site is built by cysteine 336, cysteine 396, and cysteine 399.

The protein belongs to the aconitase/IPM isomerase family. LeuC type 1 subfamily. In terms of assembly, heterodimer of LeuC and LeuD. [4Fe-4S] cluster is required as a cofactor.

The enzyme catalyses (2R,3S)-3-isopropylmalate = (2S)-2-isopropylmalate. The protein operates within amino-acid biosynthesis; L-leucine biosynthesis; L-leucine from 3-methyl-2-oxobutanoate: step 2/4. Catalyzes the isomerization between 2-isopropylmalate and 3-isopropylmalate, via the formation of 2-isopropylmaleate. The polypeptide is 3-isopropylmalate dehydratase large subunit (Staphylococcus epidermidis (strain ATCC 12228 / FDA PCI 1200)).